Here is a 396-residue protein sequence, read N- to C-terminus: Ornithine aminotransferase (396 aa).

K255 carries the post-translational modification N6-(pyridoxal phosphate)lysine.

It belongs to the class-III pyridoxal-phosphate-dependent aminotransferase family. OAT subfamily. Pyridoxal 5'-phosphate serves as cofactor.

It is found in the cytoplasm. The enzyme catalyses a 2-oxocarboxylate + L-ornithine = L-glutamate 5-semialdehyde + an L-alpha-amino acid. Its pathway is amino-acid biosynthesis; L-proline biosynthesis; L-glutamate 5-semialdehyde from L-ornithine: step 1/1. In terms of biological role, catalyzes the interconversion of ornithine to glutamate semialdehyde. The polypeptide is Ornithine aminotransferase (Bacillus anthracis (strain A0248)).